A 196-amino-acid chain; its full sequence is HTH-type transcriptional regulator BetI (196 aa).

Residues 8-68 (PIRRSQLIAA…ATMRHLMQAL (61 aa)) enclose the HTH tetR-type domain. The segment at residues 31–50 (SIAYIARLAGVSNGIISHYF) is a DNA-binding region (H-T-H motif).

The protein operates within amine and polyamine biosynthesis; betaine biosynthesis via choline pathway [regulation]. In terms of biological role, repressor involved in the biosynthesis of the osmoprotectant glycine betaine. It represses transcription of the choline transporter BetT and the genes of BetAB involved in the synthesis of glycine betaine. The protein is HTH-type transcriptional regulator BetI of Ectopseudomonas mendocina (strain ymp) (Pseudomonas mendocina).